The sequence spans 1029 residues: Translation initiation factor IF-2 (1029 aa).

The interval 73–441 is disordered; the sequence is RELRSEEDDG…RQRRRERKRE (369 aa). Composition is skewed to acidic residues over residues 106–121 and 148–177; these read TAEE…DEEE and AEAE…DEAE. Positions 183-196 are enriched in basic and acidic residues; it reads AADKDAAAIADEQK. 3 stretches are compositionally biased toward acidic residues: residues 213–234, 242–258, and 279–322; these read TGEE…DAEA, TEAE…AEDV, and APDE…DEEG. Residues 358–372 are compositionally biased toward basic and acidic residues; it reads KDKDKDKSSKKDKKD. The segment covering 373-386 has biased composition (basic residues); the sequence is KSNKKSKSKGKKQK. Residues 400 to 411 are compositionally biased toward low complexity; sequence QTLQETLQELEQ. The span at 417–427 shows a compositional bias: basic residues; the sequence is RQRRRRRRRKR. Basic and acidic residues predominate over residues 428 to 441; the sequence is HEEERQRRRERKRE. Residues 524 to 696 form the tr-type G domain; sequence PRAPVVTVMG…LLQSEIMELK (173 aa). Positions 533–540 are G1; the sequence is GHVDHGKT. 533 to 540 provides a ligand contact to GTP; the sequence is GHVDHGKT. The tract at residues 558–562 is G2; sequence GITQH. The tract at residues 582–585 is G3; that stretch reads DTPG. Residues 582 to 586 and 636 to 639 contribute to the GTP site; these read DTPGH and NKMD. The segment at 636–639 is G4; that stretch reads NKMD. Positions 672–674 are G5; the sequence is SAK.

This sequence belongs to the TRAFAC class translation factor GTPase superfamily. Classic translation factor GTPase family. IF-2 subfamily.

It is found in the cytoplasm. Its function is as follows. One of the essential components for the initiation of protein synthesis. Protects formylmethionyl-tRNA from spontaneous hydrolysis and promotes its binding to the 30S ribosomal subunits. Also involved in the hydrolysis of GTP during the formation of the 70S ribosomal complex. In Salinibacter ruber (strain DSM 13855 / M31), this protein is Translation initiation factor IF-2.